We begin with the raw amino-acid sequence, 100 residues long: A-type ATP synthase subunit F (100 aa).

Belongs to the V-ATPase F subunit family. In terms of assembly, has multiple subunits with at least A(3), B(3), C, D, E, F, H, I and proteolipid K(x).

It is found in the cell membrane. Component of the A-type ATP synthase that produces ATP from ADP in the presence of a proton gradient across the membrane. This Methanoregula boonei (strain DSM 21154 / JCM 14090 / 6A8) protein is A-type ATP synthase subunit F.